A 325-amino-acid chain; its full sequence is Tagatose 1,6-diphosphate aldolase (325 aa).

This sequence belongs to the aldolase LacD family.

The catalysed reaction is D-tagatofuranose 1,6-bisphosphate = D-glyceraldehyde 3-phosphate + dihydroxyacetone phosphate. It participates in carbohydrate metabolism; D-tagatose 6-phosphate degradation; D-glyceraldehyde 3-phosphate and glycerone phosphate from D-tagatose 6-phosphate: step 2/2. This is Tagatose 1,6-diphosphate aldolase from Staphylococcus haemolyticus (strain JCSC1435).